An 82-amino-acid polypeptide reads, in one-letter code: ATP synthase subunit c, chloroplastic (82 aa).

Helical transmembrane passes span 7–27 and 57–77; these read AASV…PGIG and LAFM…LLFA.

This sequence belongs to the ATPase C chain family. F-type ATPases have 2 components, F(1) - the catalytic core - and F(0) - the membrane proton channel. F(1) has five subunits: alpha(3), beta(3), gamma(1), delta(1), epsilon(1). F(0) has four main subunits: a(1), b(1), b'(1) and c(10-14). The alpha and beta chains form an alternating ring which encloses part of the gamma chain. F(1) is attached to F(0) by a central stalk formed by the gamma and epsilon chains, while a peripheral stalk is formed by the delta, b and b' chains.

The protein resides in the plastid. Its subcellular location is the chloroplast thylakoid membrane. Functionally, f(1)F(0) ATP synthase produces ATP from ADP in the presence of a proton or sodium gradient. F-type ATPases consist of two structural domains, F(1) containing the extramembraneous catalytic core and F(0) containing the membrane proton channel, linked together by a central stalk and a peripheral stalk. During catalysis, ATP synthesis in the catalytic domain of F(1) is coupled via a rotary mechanism of the central stalk subunits to proton translocation. Key component of the F(0) channel; it plays a direct role in translocation across the membrane. A homomeric c-ring of between 10-14 subunits forms the central stalk rotor element with the F(1) delta and epsilon subunits. In Porphyra purpurea (Red seaweed), this protein is ATP synthase subunit c, chloroplastic.